The sequence spans 440 residues: MSYFEHIPAIRYEGPQSDNPLAYHHYDPAKRVLGKTLAEHLRIAVCYWHTFVWPGHDMFGQGTFVRPWQQPGDPLERARMKADAAFEFFSKLGTPFYTFHDTDVAPEGDNLREYTANFARMVDYLGERQQASGVRLLWGTANLFSHPRFAAGAATNPNPDVFAWAATQVRHALDATHRLGGENYVLWGGREGYETLLNTDLKRERDQFARFLSMVVEHKHRIGFNGALLIEPKPQEPTKHQYDYDVATVHGFLVQYGLQDEIRVNIEANHATLAGHSFHHEIANAFALGVFGSVDANRGDPQNGWDTDQFPNSVEELTLAFYEILRHGGFTTGGMNFDAKVRRQSVAAEDLFYGHVGAIDVLALALERAAVLVENDRLDALRRQRYAQWDDAFGRKILSGGYTLQSLADDALARGVNPQHVSGAQERLENIVNQAIYALR.

Residues His-100 and Asp-103 contribute to the active site. Positions 231, 267, 270, 295, 306, 308, and 338 each coordinate Mg(2+).

It belongs to the xylose isomerase family. As to quaternary structure, homotetramer. It depends on Mg(2+) as a cofactor.

The protein resides in the cytoplasm. The enzyme catalyses alpha-D-xylose = alpha-D-xylulofuranose. The chain is Xylose isomerase from Burkholderia vietnamiensis (strain G4 / LMG 22486) (Burkholderia cepacia (strain R1808)).